Consider the following 514-residue polypeptide: 2-isopropylmalate synthase (514 aa).

In terms of domain architecture, Pyruvate carboxyltransferase spans 4–266 (INVFDTSLRD…KTGLKLSELK (263 aa)). Residues Asp-13, His-201, His-203, and Asn-237 each coordinate Mn(2+). Positions 390–514 (ELTALQVTYG…AKREMAKVES (125 aa)) are regulatory domain.

This sequence belongs to the alpha-IPM synthase/homocitrate synthase family. LeuA type 1 subfamily. Homodimer. Mn(2+) is required as a cofactor.

It is found in the cytoplasm. It catalyses the reaction 3-methyl-2-oxobutanoate + acetyl-CoA + H2O = (2S)-2-isopropylmalate + CoA + H(+). Its pathway is amino-acid biosynthesis; L-leucine biosynthesis; L-leucine from 3-methyl-2-oxobutanoate: step 1/4. Catalyzes the condensation of the acetyl group of acetyl-CoA with 3-methyl-2-oxobutanoate (2-ketoisovalerate) to form 3-carboxy-3-hydroxy-4-methylpentanoate (2-isopropylmalate). This is 2-isopropylmalate synthase from Shouchella clausii (strain KSM-K16) (Alkalihalobacillus clausii).